Consider the following 212-residue polypeptide: Thymidylate kinase (212 aa).

7 to 14 (GGEGCGKT) lines the ATP pocket.

Belongs to the thymidylate kinase family.

It carries out the reaction dTMP + ATP = dTDP + ADP. In terms of biological role, phosphorylation of dTMP to form dTDP in both de novo and salvage pathways of dTTP synthesis. This chain is Thymidylate kinase, found in Gloeobacter violaceus (strain ATCC 29082 / PCC 7421).